Reading from the N-terminus, the 248-residue chain is Small ribosomal subunit protein uS3 (248 aa).

The 75-residue stretch at I39–T113 folds into the KH type-2 domain. The tract at residues E218–A248 is disordered. Basic and acidic residues predominate over residues P238–A248.

This sequence belongs to the universal ribosomal protein uS3 family. As to quaternary structure, part of the 30S ribosomal subunit. Forms a tight complex with proteins S10 and S14.

Its function is as follows. Binds the lower part of the 30S subunit head. Binds mRNA in the 70S ribosome, positioning it for translation. This is Small ribosomal subunit protein uS3 from Synechococcus sp. (strain JA-3-3Ab) (Cyanobacteria bacterium Yellowstone A-Prime).